The chain runs to 138 residues: Acidic phospholipase A2 PL1 (138 aa).

The first 16 residues, 1–16 (MRALWIVAVCLIGAEG), serve as a signal peptide directing secretion. 7 disulfides stabilise this stretch: Cys42–Cys131, Cys44–Cys60, Cys59–Cys111, Cys65–Cys138, Cys66–Cys104, Cys73–Cys97, and Cys91–Cys102. Ca(2+) contacts are provided by Tyr43, Gly45, and Gly47. The active site involves His63. A Ca(2+)-binding site is contributed by Asp64. Asp105 is an active-site residue.

The protein belongs to the phospholipase A2 family. Group II subfamily. D49 sub-subfamily. The cofactor is Ca(2+). As to expression, expressed by the venom gland.

It is found in the secreted. It catalyses the reaction a 1,2-diacyl-sn-glycero-3-phosphocholine + H2O = a 1-acyl-sn-glycero-3-phosphocholine + a fatty acid + H(+). In terms of biological role, PLA2 catalyzes the calcium-dependent hydrolysis of the 2-acyl groups in 3-sn-phosphoglycerides. The polypeptide is Acidic phospholipase A2 PL1 (Vipera renardi (Steppe viper)).